The following is an 87-amino-acid chain: MANIKSKKKRIKTNEKARQRNKAIRSRLHTENRKFRELVAAGDKAGAEAQLRLASREYDKAVTKGTLHRNNAANKKSAMAKLFNSMD.

Residues 1–11 (MANIKSKKKRI) show a composition bias toward basic residues. The disordered stretch occupies residues 1 to 25 (MANIKSKKKRIKTNEKARQRNKAIR).

This sequence belongs to the bacterial ribosomal protein bS20 family.

In terms of biological role, binds directly to 16S ribosomal RNA. This chain is Small ribosomal subunit protein bS20, found in Corynebacterium kroppenstedtii (strain DSM 44385 / JCM 11950 / CIP 105744 / CCUG 35717).